The following is a 333-amino-acid chain: D-2-hydroxyacid dehydrogenase (NAD+) (333 aa).

Y100 provides a ligand contact to 4-methyl-2-oxopentanoate. 8 residues coordinate NAD(+): H155, I156, D175, V205, N211, T232, R234, and D258. R234 is a catalytic residue. E263 is an active-site residue. H295 serves as a coordination point for 4-methyl-2-oxopentanoate. H295 acts as the Proton donor in catalysis.

Belongs to the D-isomer specific 2-hydroxyacid dehydrogenase family. In terms of assembly, homodimer.

It carries out the reaction a (2R)-2-hydroxycarboxylate + NAD(+) = a 2-oxocarboxylate + NADH + H(+). The catalysed reaction is (2R)-hydroxy-4-methylpentanoate + NAD(+) = 4-methyl-2-oxopentanoate + NADH + H(+). The enzyme catalyses (R)-3-phenyllactate + NAD(+) = 3-phenylpyruvate + NADH + H(+). With respect to regulation, completely inhibited In the presence of 0.1 mM Hg(2+). No influence on the activity could be detected with Mg(2+) and Ca(2+) and only very weak effects with Cd(2+), Co(2+) and Mn(2+). Reducing agents and thiol group reagents do not affect catalytic activity. Functionally, catalyzes the NADH-dependent reversible reduction of various 2-ketocarboxylic acids to the corresponding D-2-hydroxycarboxylic acids. In vitro can use various substrates, including 4-methyl-2-oxopentanoate (2-oxoisocaproate), 2-oxopentanoate, 2-oxohexanoate and phenylpyruvate. This chain is D-2-hydroxyacid dehydrogenase (NAD+), found in Lacticaseibacillus paracasei (Lactobacillus paracasei).